A 270-amino-acid chain; its full sequence is MARKVFYISDGTAITAEVFGHAVLSQFPMEFEAITIPFVETNAKAEAVKKQINDSFITTGERPLVFHSIVKPEIRDVIYSSEGLDYDFLNTFVAPLEQQLGVSAAPVLHRTHGKANHSYEARIDAINFAMENDDGQTLKHMDKADIILLGVSRCGKTPSSLYLSMQFGIKAANYPFTEDDMDSLKLPEALKRNKHKLFGLTIDPVRLQEIRQSRMENSRYSSLRQCRMEVKEVEMMFKKERIPYIDTTNHSVEEIATKILDMTGMERHMF.

Residue 150-157 (GVSRCGKT) coordinates ADP.

The protein belongs to the pyruvate, phosphate/water dikinase regulatory protein family. PSRP subfamily.

It catalyses the reaction [pyruvate, water dikinase] + ADP = [pyruvate, water dikinase]-phosphate + AMP + H(+). The enzyme catalyses [pyruvate, water dikinase]-phosphate + phosphate + H(+) = [pyruvate, water dikinase] + diphosphate. Bifunctional serine/threonine kinase and phosphorylase involved in the regulation of the phosphoenolpyruvate synthase (PEPS) by catalyzing its phosphorylation/dephosphorylation. The polypeptide is Putative phosphoenolpyruvate synthase regulatory protein (Shewanella amazonensis (strain ATCC BAA-1098 / SB2B)).